A 452-amino-acid chain; its full sequence is Cobyrinate a,c-diamide synthase (452 aa).

The GATase cobBQ-type domain maps to 248 to 441; the sequence is RVAYALDAAF…LHIHFYQNLL (194 aa). The active-site Nucleophile is the Cys-330.

This sequence belongs to the CobB/CbiA family. Mg(2+) is required as a cofactor.

It carries out the reaction cob(II)yrinate + 2 L-glutamine + 2 ATP + 2 H2O = cob(II)yrinate a,c diamide + 2 L-glutamate + 2 ADP + 2 phosphate + 2 H(+). Its pathway is cofactor biosynthesis; adenosylcobalamin biosynthesis; cob(II)yrinate a,c-diamide from sirohydrochlorin (anaerobic route): step 10/10. In terms of biological role, catalyzes the ATP-dependent amidation of the two carboxylate groups at positions a and c of cobyrinate, using either L-glutamine or ammonia as the nitrogen source. This chain is Cobyrinate a,c-diamide synthase, found in Listeria monocytogenes serotype 4b (strain F2365).